The primary structure comprises 278 residues: Small ribosomal subunit protein uS3 (278 aa).

The KH type-2 domain maps to 39 to 107 (LRKAIAKKYV…KVQLNIVEIS (69 aa)). The interval 244–278 (AKPKRVTKKAEAEASAEEKPKRAAKKAENITKEEE) is disordered. Residues 251-278 (KKAEAEASAEEKPKRAAKKAENITKEEE) show a composition bias toward basic and acidic residues.

Belongs to the universal ribosomal protein uS3 family. Part of the 30S ribosomal subunit. Forms a tight complex with proteins S10 and S14.

Binds the lower part of the 30S subunit head. Binds mRNA in the 70S ribosome, positioning it for translation. In Dehalococcoides mccartyi (strain ATCC BAA-2266 / KCTC 15142 / 195) (Dehalococcoides ethenogenes (strain 195)), this protein is Small ribosomal subunit protein uS3.